Here is a 521-residue protein sequence, read N- to C-terminus: Maturase K (521 aa).

It belongs to the intron maturase 2 family. MatK subfamily.

It is found in the plastid. Its subcellular location is the chloroplast. Functionally, usually encoded in the trnK tRNA gene intron. Probably assists in splicing its own and other chloroplast group II introns. The polypeptide is Maturase K (Trillium erectum (Beth root)).